We begin with the raw amino-acid sequence, 1406 residues long: Enhancer of mRNA-decapping protein 4 (1406 aa).

Alanine 2 is modified (N-acetylalanine). Phosphoserine occurs at positions 3 and 6. Position 125 is an N6-acetyllysine (lysine 125). 4 WD repeats span residues 174–214 (GFTG…GKIQ), 230–277 (NHFR…SSHN), 295–334 (GHST…QDEP), and 342–393 (PHDG…CLQT). Residues serine 560, serine 565, serine 583, and serine 585 each carry the phosphoserine modification. 2 disordered regions span residues 604 to 631 (SLQQ…SSSS) and 667 to 686 (SLTL…SLLP). The segment covering 609–631 (SASPSSSSSSSSSSSSSSSSSSS) has biased composition (low complexity). Residues serine 680, serine 712, serine 727, and serine 729 each carry the phosphoserine modification. The disordered stretch occupies residues 719–744 (EPLGLPQASPSRTRSPDVISSASTAL). Residues 726-744 (ASPSRTRSPDVISSASTAL) are compositionally biased toward polar residues. Threonine 731 is modified (phosphothreonine). Serine 733 and serine 745 each carry phosphoserine. 2 disordered regions span residues 782-855 (HLLS…NGLQ) and 873-951 (QRDS…VAEP). Polar residues-rich tracts occupy residues 823–832 (EVATPDSQVW) and 841–852 (ETCSTLTESPRN). Threonine 826 bears the Phosphothreonine mark. Serine 849 and serine 876 each carry phosphoserine. Threonine 879 carries the phosphothreonine modification. Phosphoserine is present on residues serine 880, serine 884, serine 892, serine 895, and serine 897. Threonine 906 carries the phosphothreonine modification. Positions 971–1030 (HNQEELLQRLCAQLEGLQSTVTDHVERALETRHEQEQRRLERALAEGQQRGGQLQEQLTQ) form a coiled coil. Position 1385 is a phosphoserine (serine 1385).

The protein belongs to the WD repeat EDC4 family. As to quaternary structure, part of a decapping complex consisting of DCP1A, DCP2, EDC3, EDC4 and probably DDX6. Part of a complex consisting of DCP1A, EDC3, EDC4 and DDX6. Part of a complex consisting of DCP1B, EDC3, EDC4 and DDX6. Interacts with DCP2. Interacts with RC3H1. Interacts with NBDY. Interacts with Tex19.1 and, probably, Tex19.2. Interacts with LSM14A. Interacts with DDX6.

Its subcellular location is the cytoplasm. The protein resides in the P-body. The protein localises to the nucleus. In the process of mRNA degradation, seems to play a role in mRNA decapping. Component of a complex containing DCP2 and DCP1A which functions in decapping of ARE-containing mRNAs. Promotes complex formation between DCP1A and DCP2. Enhances the catalytic activity of DCP2 (in vitro). This chain is Enhancer of mRNA-decapping protein 4, found in Mus musculus (Mouse).